Consider the following 524-residue polypeptide: MSATLQRVAPLSGGEGHRTPIDSGAGFVLEMRSITKAFPGVLALDGMSLKVRAGTVHVLVGENGAGKSTLMKILSGIYAIDGGEILFRGEKLDHQSAAAALERGISMIHQELSPVLDMTIAENIFLGREPTYSRTGVLSRFVDFDRMNSDTQTLLDRLGLKYSPQTKMRDLSIATMQLIEIVKAISREASLIIMDEPTSAISDTEVAMLFRQIADLKAAGVAIIYITHKMDEIFQIADDITVMRDGQFVAAAPASEYEPAKLISQMVGRTISSIFPKEEVPIGDIVLSVENLSRDGVFDNVGFEVRAGEIVGLSGLIGAGRTEVARVIFGLDAADAGVVRLNGKPLKLTSPKDAIANGIAMVSEDRKAEGLVLCRSVGENISLANLKKFASGIFISERQEETASQRMIKMLQIKTPDTAMIVENLSGGNQQKIVLAKWLLGDLKLLILDEPTRGIDVGSKSEIHRLMTEFARQGLAIIMISSELPEILGMSDRVVVMSEGRVTGELTRAEATQENIMRLATGGH.

2 consecutive ABC transporter domains span residues L29–T270 and V280–H524. G61 to S68 is an ATP binding site.

The protein belongs to the ABC transporter superfamily. Carbohydrate importer 2 (CUT2) (TC 3.A.1.2) family.

Its subcellular location is the cell inner membrane. The catalysed reaction is D-ribose(out) + ATP + H2O = D-ribose(in) + ADP + phosphate + H(+). The enzyme catalyses D-galactose(out) + ATP + H2O = D-galactose(in) + ADP + phosphate + H(+). Its function is as follows. Part of an ABC transporter complex involved in carbohydrate import. Could be involved in ribose, galactose and/or methyl galactoside import. Responsible for energy coupling to the transport system. The polypeptide is Putative ribose/galactose/methyl galactoside import ATP-binding protein 1 (Rhizobium etli (strain ATCC 51251 / DSM 11541 / JCM 21823 / NBRC 15573 / CFN 42)).